A 424-amino-acid chain; its full sequence is Magnesium-chelatase subunit ChlI-1, chloroplastic (424 aa).

The transit peptide at methionine 1 to serine 60 directs the protein to the chloroplast. Residue valine 61 is modified to N-acetylvaline. 2 cysteine pairs are disulfide-bonded: cysteine 102-cysteine 193 and cysteine 354-cysteine 396. Glycine 119–serine 126 provides a ligand contact to ATP. The residue at position 355 (serine 355) is a Phosphoserine.

The protein belongs to the Mg-chelatase subunits D/I family. In terms of assembly, the magnesium chelatase complex is a heterotrimer consisting of subunits CHLI, CHLD and CHLH. Interacts with CHLH and CHLD.

Its subcellular location is the plastid. The protein localises to the chloroplast. The enzyme catalyses protoporphyrin IX + Mg(2+) + ATP + H2O = Mg-protoporphyrin IX + ADP + phosphate + 3 H(+). Its pathway is porphyrin-containing compound metabolism; chlorophyll biosynthesis. Its activity is regulated as follows. Redox regulation; active in reducing conditions, inactive in oxidizing conditions. Thioredoxins f and m mediate the reversible reductive activation of oxidized CHLI1. In terms of biological role, involved in chlorophyll biosynthesis. Catalyzes the insertion of magnesium ion into protoporphyrin IX to yield Mg-protoporphyrin IX. The magnesium-chelatase is a complex of three subunits, CHLI, CHLD and CHLH. The reaction takes place in two steps, with an ATP-dependent activation followed by an ATP-dependent chelation step. Possesses high affinity for ATP and may play a major role in chlorophyll biosynthesis. Does not bind abscisic acid (ABA), but is a positive regulator of ABA signaling. May be involved in ABA signaling in the control of stomatal aperture, but does not seem to have an effect on ABA-induced gene expression. The protein is Magnesium-chelatase subunit ChlI-1, chloroplastic (CHLI1) of Arabidopsis thaliana (Mouse-ear cress).